The following is a 200-amino-acid chain: Probable molybdenum cofactor guanylyltransferase (200 aa).

GTP-binding positions include 8-10, Lys-20, Asp-66, and Asp-97; that span reads LAG. Residue Asp-97 coordinates Mg(2+).

This sequence belongs to the MobA family. Mg(2+) is required as a cofactor.

The protein localises to the cytoplasm. The enzyme catalyses Mo-molybdopterin + GTP + H(+) = Mo-molybdopterin guanine dinucleotide + diphosphate. In terms of biological role, transfers a GMP moiety from GTP to Mo-molybdopterin (Mo-MPT) cofactor (Moco or molybdenum cofactor) to form Mo-molybdopterin guanine dinucleotide (Mo-MGD) cofactor. This is Probable molybdenum cofactor guanylyltransferase from Bacillus velezensis (strain DSM 23117 / BGSC 10A6 / LMG 26770 / FZB42) (Bacillus amyloliquefaciens subsp. plantarum).